The primary structure comprises 472 residues: Ribosomal protein uS12 methylthiotransferase RimO (472 aa).

Residues 33-143 (NRIGFVSLGC…VLKHVHKYVP (111 aa)) form the MTTase N-terminal domain. Residues Cys-42, Cys-78, Cys-107, Cys-175, Cys-179, and Cys-182 each contribute to the [4Fe-4S] cluster site. In terms of domain architecture, Radical SAM core spans 161-398 (LTPKHYAYLK…MEVQAEISAE (238 aa)). Residues 401-467 (ARFVGRTLDI…EHDLWAEVVD (67 aa)) enclose the TRAM domain.

This sequence belongs to the methylthiotransferase family. RimO subfamily. [4Fe-4S] cluster serves as cofactor.

Its subcellular location is the cytoplasm. It carries out the reaction L-aspartate(89)-[ribosomal protein uS12]-hydrogen + (sulfur carrier)-SH + AH2 + 2 S-adenosyl-L-methionine = 3-methylsulfanyl-L-aspartate(89)-[ribosomal protein uS12]-hydrogen + (sulfur carrier)-H + 5'-deoxyadenosine + L-methionine + A + S-adenosyl-L-homocysteine + 2 H(+). Its function is as follows. Catalyzes the methylthiolation of an aspartic acid residue of ribosomal protein uS12. The polypeptide is Ribosomal protein uS12 methylthiotransferase RimO (Shewanella baltica (strain OS155 / ATCC BAA-1091)).